The following is a 360-amino-acid chain: Dihydroorotate dehydrogenase (quinone) (360 aa).

Residues 66–70 (AGFDK) and T90 contribute to the FMN site. Substrate is bound at residue K70. Substrate is bound at residue 115 to 119 (NRMGF). Residues N143 and N176 each contribute to the FMN site. Substrate is bound at residue N176. Catalysis depends on S179, which acts as the Nucleophile. N181 lines the substrate pocket. Residues K212 and T240 each coordinate FMN. Substrate is bound at residue 241 to 242 (NT). FMN is bound by residues G264, G293, and 314 to 315 (YT).

It belongs to the dihydroorotate dehydrogenase family. Type 2 subfamily. Monomer. The cofactor is FMN.

The protein resides in the cell membrane. It catalyses the reaction (S)-dihydroorotate + a quinone = orotate + a quinol. It functions in the pathway pyrimidine metabolism; UMP biosynthesis via de novo pathway; orotate from (S)-dihydroorotate (quinone route): step 1/1. In terms of biological role, catalyzes the conversion of dihydroorotate to orotate with quinone as electron acceptor. The chain is Dihydroorotate dehydrogenase (quinone) from Mycobacterium ulcerans (strain Agy99).